A 101-amino-acid polypeptide reads, in one-letter code: A-type ATP synthase subunit K (101 aa).

A run of 3 helical transmembrane segments spans residues 5–25 (WLPF…AQAP), 37–57 (IGAG…VGMA), and 75–95 (ILIF…FAVL).

It belongs to the V-ATPase proteolipid subunit family. Has multiple subunits with at least A(3), B(3), C, D, E, F, H, I and proteolipid K(x). The N-terminus is blocked.

Its subcellular location is the cell membrane. Functionally, component of the A-type ATP synthase that produces ATP from ADP in the presence of a proton gradient across the membrane. The chain is A-type ATP synthase subunit K from Sulfurisphaera tokodaii (strain DSM 16993 / JCM 10545 / NBRC 100140 / 7) (Sulfolobus tokodaii).